A 191-amino-acid chain; its full sequence is Transcription factor E (191 aa).

One can recognise an HTH TFE/IIEalpha-type domain in the interval 4–87 (RNKELLEIGR…YWHIETKRLP (84 aa)). The disordered stretch occupies residues 170–191 (APPKKEKKGKKSKKRSKKSKKK). A compositionally biased stretch (basic residues) spans 174–191 (KEKKGKKSKKRSKKSKKK).

Belongs to the TFE family. In terms of assembly, monomer. Interaction with RNA polymerase subunits RpoF and RpoE is necessary for Tfe stimulatory transcription activity. Able to interact with Tbp and RNA polymerase in the absence of DNA promoter. Interacts both with the preinitiation and elongation complexes.

Its function is as follows. Transcription factor that plays a role in the activation of archaeal genes transcribed by RNA polymerase. Facilitates transcription initiation by enhancing TATA-box recognition by TATA-box-binding protein (Tbp), and transcription factor B (Tfb) and RNA polymerase recruitment. Not absolutely required for transcription in vitro, but particularly important in cases where Tbp or Tfb function is not optimal. It dynamically alters the nucleic acid-binding properties of RNA polymerases by stabilizing the initiation complex and destabilizing elongation complexes. Seems to translocate with the RNA polymerase following initiation and acts by binding to the non template strand of the transcription bubble in elongation complexes. This is Transcription factor E from Pyrococcus horikoshii (strain ATCC 700860 / DSM 12428 / JCM 9974 / NBRC 100139 / OT-3).